Consider the following 92-residue polypeptide: Arrestin-C (92 aa).

The protein belongs to the arrestin family. As to quaternary structure, homodimer; disulfide-linked in response to retinal illumination. Interacts with CXCR4; the interaction is dependent on the C-terminal phosphorylation of CXCR4 and modulates the calcium ion mobilization activity of CXCR4. Interacts with GPR84. Retina and pineal gland.

Its subcellular location is the photoreceptor inner segment. The protein localises to the cell projection. It localises to the cilium. It is found in the photoreceptor outer segment. In terms of biological role, may play a role in an as yet undefined retina-specific signal transduction. Could bind to photoactivated-phosphorylated red/green opsins. The protein is Arrestin-C (Arr3) of Rattus norvegicus (Rat).